The chain runs to 370 residues: Peptidyl-prolyl cis-trans isomerase D (370 aa).

In terms of domain architecture, PPIase cyclophilin-type spans 11 to 176 (FFDISADGKP…EDWIISDCGE (166 aa)). TPR repeat units follow at residues 218–251 (VTTLKDIGTKQLKDGNVAAAYEKYNKASGFLNDY), 269–302 (LSCYLNAALVALKLKDGKKTINAASNALEVEAID), and 307–340 (TKALYRKGMGYLLAKDEESAQKSLEEALQLSPED).

This sequence belongs to the cyclophilin-type PPIase family. PPIase D subfamily.

The protein resides in the cytoplasm. It catalyses the reaction [protein]-peptidylproline (omega=180) = [protein]-peptidylproline (omega=0). PPIases accelerate the folding of proteins. It catalyzes the cis-trans isomerization of proline imidic peptide bonds in oligopeptides. This Debaryomyces hansenii (strain ATCC 36239 / CBS 767 / BCRC 21394 / JCM 1990 / NBRC 0083 / IGC 2968) (Yeast) protein is Peptidyl-prolyl cis-trans isomerase D (CPR6).